The chain runs to 62 residues: DNA-directed RNA polymerase subunit Rpo10 (62 aa).

Positions 6, 9, 43, and 44 each coordinate Zn(2+).

Belongs to the archaeal Rpo10/eukaryotic RPB10 RNA polymerase subunit family. In terms of assembly, part of the RNA polymerase complex. It depends on Zn(2+) as a cofactor.

Its subcellular location is the cytoplasm. It catalyses the reaction RNA(n) + a ribonucleoside 5'-triphosphate = RNA(n+1) + diphosphate. Its function is as follows. DNA-dependent RNA polymerase (RNAP) catalyzes the transcription of DNA into RNA using the four ribonucleoside triphosphates as substrates. In Methanoculleus marisnigri (strain ATCC 35101 / DSM 1498 / JR1), this protein is DNA-directed RNA polymerase subunit Rpo10.